The following is a 451-amino-acid chain: GABA transporter 1 (451 aa).

11 helical membrane passes run 35 to 55 (CGFHLTTSIVAPALLSLPYAF), 57 to 77 (FLGWAAGISCLVGGAAVTFYS), 115 to 135 (VGPIQMAVCYGVVIANALLGG), 153 to 173 (LFEFVIIFGCLLLVLAQFPSF), 182 to 202 (LSLLLCLLYSASAAAASIYIG), 222 to 242 (VFGIFNAMAIIATTYGNGIIP), 262 to 282 (MCYLVVIMTFFTVAITGYWAF), 308 to 328 (FIFLVNLFTVLQLSAVAVVYL), 356 to 376 (LVVRSLFVVMATIVAAMLPFF), 382 to 402 (LLGAFGFIPLDFVLPVVFFNF), and 411 to 431 (FIFWINTVIAVVFSCLGVIAM).

This sequence belongs to the amino acid/polyamine transporter 2 family. Amino acid/auxin permease (AAAP) (TC 2.A.18.2) subfamily. As to expression, highly expressed in flowers and at lower levels in roots, leaves and stems.

It is found in the cell membrane. High affinity gamma-aminobutyric acid (GABA) transporter probably involved in GABA uptake into cells. When expressed in a heterologous system (Xenopus oocytes), imports GABA, butylamine, beta- and L-Alanine, 5-aminovaleric acid, 6-aminocaproic acid and 8-aminocaprylic acid, but does not mediate the transport of proline or glycine betaine. This chain is GABA transporter 1 (GAT1), found in Arabidopsis thaliana (Mouse-ear cress).